The sequence spans 124 residues: Small ribosomal subunit protein uS12 (124 aa).

The segment at 1–24 is disordered; it reads MPTINQLVRQGRKKSVKKTNTPAL. Asp89 is modified (3-methylthioaspartic acid).

The protein belongs to the universal ribosomal protein uS12 family. Part of the 30S ribosomal subunit. Contacts proteins S8 and S17. May interact with IF1 in the 30S initiation complex.

Its function is as follows. With S4 and S5 plays an important role in translational accuracy. Functionally, interacts with and stabilizes bases of the 16S rRNA that are involved in tRNA selection in the A site and with the mRNA backbone. Located at the interface of the 30S and 50S subunits, it traverses the body of the 30S subunit contacting proteins on the other side and probably holding the rRNA structure together. The combined cluster of proteins S8, S12 and S17 appears to hold together the shoulder and platform of the 30S subunit. This chain is Small ribosomal subunit protein uS12, found in Desulfotalea psychrophila (strain LSv54 / DSM 12343).